The sequence spans 89 residues: Small ribosomal subunit protein uS17 (89 aa).

It belongs to the universal ribosomal protein uS17 family. In terms of assembly, part of the 30S ribosomal subunit.

One of the primary rRNA binding proteins, it binds specifically to the 5'-end of 16S ribosomal RNA. This is Small ribosomal subunit protein uS17 from Xylella fastidiosa (strain M12).